The primary structure comprises 253 residues: Imidazole glycerol phosphate synthase subunit HisF (253 aa).

Catalysis depends on residues aspartate 11 and aspartate 130.

The protein belongs to the HisA/HisF family. As to quaternary structure, heterodimer of HisH and HisF.

It is found in the cytoplasm. It catalyses the reaction 5-[(5-phospho-1-deoxy-D-ribulos-1-ylimino)methylamino]-1-(5-phospho-beta-D-ribosyl)imidazole-4-carboxamide + L-glutamine = D-erythro-1-(imidazol-4-yl)glycerol 3-phosphate + 5-amino-1-(5-phospho-beta-D-ribosyl)imidazole-4-carboxamide + L-glutamate + H(+). It functions in the pathway amino-acid biosynthesis; L-histidine biosynthesis; L-histidine from 5-phospho-alpha-D-ribose 1-diphosphate: step 5/9. IGPS catalyzes the conversion of PRFAR and glutamine to IGP, AICAR and glutamate. The HisF subunit catalyzes the cyclization activity that produces IGP and AICAR from PRFAR using the ammonia provided by the HisH subunit. This is Imidazole glycerol phosphate synthase subunit HisF from Ruegeria pomeroyi (strain ATCC 700808 / DSM 15171 / DSS-3) (Silicibacter pomeroyi).